The chain runs to 215 residues: Inositol diphosphatase DSP1 (215 aa).

The Tyrosine-protein phosphatase domain maps to 58–209 (NFSMVDNGIF…VSSFSHIPMS (152 aa)). The segment at 114-126 (FGIEGNKEPFVNI) is WPD loop important for active site topology. 1D-myo-inositol hexakisphosphate contacts are provided by N125, I126, H129, and K130. The Phosphocysteine intermediate role is filled by C150.

Belongs to the protein-tyrosine phosphatase family. Atypical dual-specificity phosphatase Siw14-like subfamily. In terms of assembly, homodimer and homohexamer; behaves as a monomer in solution. As to expression, highly expressed in siliques and at lower levels in roots, leaves and flowers.

The catalysed reaction is 5-diphospho-1D-myo-inositol 1,2,3,4,6-pentakisphosphate + H2O = 1D-myo-inositol hexakisphosphate + phosphate + H(+). It catalyses the reaction 1,5-bis(diphospho)-1D-myo-inositol 2,3,4,6-tetrakisphosphate + H2O = 1-diphospho-1D-myo-inositol 2,3,4,5,6-pentakisphosphate + phosphate + 2 H(+). It carries out the reaction 3,5-bis(diphospho)-1D-myo-inositol 1,2,4,6-tetrakisphosphate + H2O = 3-diphospho-1D-myo-inositol 1,2,4,5,6-pentakisphosphate + phosphate + 2 H(+). The enzyme catalyses 6-diphospho-1D-myo-inositol pentakisphosphate + H2O = 1D-myo-inositol hexakisphosphate + phosphate + H(+). The catalysed reaction is 5-diphospho-1D-myo-inositol 1,3,4,6-tetrakisphosphate + H2O = 1D-myo-inositol 1,3,4,5,6-pentakisphosphate + phosphate + H(+). Its activity is regulated as follows. Inhibited by manganese, calcium and zinc ions but not magnesium ions. Cleaves the beta-phosphate at the 5-position of soluble inositol pyrophosphates. Has highest activity on 5-diphosphoinositol 1,2,3,4,6-pentakisphosphate (5-InsP(7)), 1,5-bis-diphosphoinositol 2,3,4,6-tetrakisphosphate (1,5-InsP(8)) and 3,5-InsP(8), but has weak activity against 1-diphosphoinositol 2,3,4,5,6-pentakisphosphate (1-InsP(7)). Dephosphorylates the phosphoinositides PI(3,4,5)P3, PI(3,5)P2, but not PI(3)P, PI(3,4)P2 or PI(4,5)P2. Possesses phosphotyrosine phosphatase activity in vitro, and can hydrolyze para-nitrophenyl phosphate, O-methylfluorescein phosphate, polyphosphate and ATP. This Arabidopsis thaliana (Mouse-ear cress) protein is Inositol diphosphatase DSP1.